Reading from the N-terminus, the 446-residue chain is Anthranilate N-benzoyltransferase protein 2 (446 aa).

Catalysis depends on proton acceptor residues His164 and Asp393.

The protein belongs to the plant acyltransferase family. Post-translationally, N-terminus is blocked.

It carries out the reaction anthranilate + benzoyl-CoA = N-benzoylanthranilate + CoA. The protein operates within phytoalexin biosynthesis; methoxydianthramide B biosynthesis. In terms of biological role, catalyzes the formation of N-benzoylanthranilate, in the course of methoxydianthramide B, a phytoalexin. Phytoalexins are produced in response to infection by parasites, and are essential for the expression of disease resistance. This Dianthus caryophyllus (Carnation) protein is Anthranilate N-benzoyltransferase protein 2 (HCBT2).